We begin with the raw amino-acid sequence, 402 residues long: Plasminogen activator inhibitor 1 (402 aa).

A signal peptide spans 1–23; that stretch reads MRMSLVFACLAMGLALTFAEGSA. N-linked (GlcNAc...) asparagine glycosylation is found at Asn-232, Asn-288, and Asn-352.

The protein belongs to the serpin family. Forms a heterodimer with TMPRSS7. Interacts with VTN. Binds LRP1B; binding is followed by internalization and degradation. Interacts with PPP1CB. In complex with PLAU/uPA, interacts with PLAUR/uPAR. Interacts with SORL1 and LRP1, either alone or in complex with PLAU; these interactions are abolished in the presence of LRPAP1/RAP. The ternary complex composed of PLAUR-PLAU-PAI1 also interacts with SORL1. Interacts with PLAT/tPA. Also interacts with SORL1, when complexed to PLAT/tPA.

The protein localises to the secreted. Its function is as follows. Serine protease inhibitor. Inhibits TMPRSS7. Is a primary inhibitor of tissue-type plasminogen activator (PLAT) and urokinase-type plasminogen activator (PLAU). As PLAT inhibitor, it is required for fibrinolysis down-regulation and is responsible for the controlled degradation of blood clots. As PLAU inhibitor, it is involved in the regulation of cell adhesion and spreading. Acts as a regulator of cell migration, independently of its role as protease inhibitor. It is required for stimulation of keratinocyte migration during cutaneous injury repair. It is involved in cellular and replicative senescence. Plays a role in alveolar type 2 cells senescence in the lung. Is involved in the regulation of cementogenic differentiation of periodontal ligament stem cells, and regulates odontoblast differentiation and dentin formation during odontogenesis. This is Plasminogen activator inhibitor 1 (SERPINE1) from Sus scrofa (Pig).